A 289-amino-acid polypeptide reads, in one-letter code: Acetyl-coenzyme A carboxylase carboxyl transferase subunit beta (289 aa).

Residues 34 to 289 (MWVKCNKCGE…KLINMHQNSF (256 aa)) form the CoA carboxyltransferase N-terminal domain. Positions 38, 41, 57, and 60 each coordinate Zn(2+). A C4-type zinc finger spans residues 38–60 (CNKCGEILYQNDLEKNYMVCNLC).

It belongs to the AccD/PCCB family. In terms of assembly, acetyl-CoA carboxylase is a heterohexamer composed of biotin carboxyl carrier protein (AccB), biotin carboxylase (AccC) and two subunits each of ACCase subunit alpha (AccA) and ACCase subunit beta (AccD). Requires Zn(2+) as cofactor.

The protein resides in the cytoplasm. It carries out the reaction N(6)-carboxybiotinyl-L-lysyl-[protein] + acetyl-CoA = N(6)-biotinyl-L-lysyl-[protein] + malonyl-CoA. The protein operates within lipid metabolism; malonyl-CoA biosynthesis; malonyl-CoA from acetyl-CoA: step 1/1. Component of the acetyl coenzyme A carboxylase (ACC) complex. Biotin carboxylase (BC) catalyzes the carboxylation of biotin on its carrier protein (BCCP) and then the CO(2) group is transferred by the transcarboxylase to acetyl-CoA to form malonyl-CoA. The polypeptide is Acetyl-coenzyme A carboxylase carboxyl transferase subunit beta (Clostridium botulinum (strain Kyoto / Type A2)).